The sequence spans 469 residues: 3-isopropylmalate dehydratase large subunit (469 aa).

Residues Cys350, Cys410, and Cys413 each contribute to the [4Fe-4S] cluster site.

This sequence belongs to the aconitase/IPM isomerase family. LeuC type 1 subfamily. As to quaternary structure, heterodimer of LeuC and LeuD. It depends on [4Fe-4S] cluster as a cofactor.

It carries out the reaction (2R,3S)-3-isopropylmalate = (2S)-2-isopropylmalate. Its pathway is amino-acid biosynthesis; L-leucine biosynthesis; L-leucine from 3-methyl-2-oxobutanoate: step 2/4. Functionally, catalyzes the isomerization between 2-isopropylmalate and 3-isopropylmalate, via the formation of 2-isopropylmaleate. The protein is 3-isopropylmalate dehydratase large subunit of Rhizobium rhizogenes (strain K84 / ATCC BAA-868) (Agrobacterium radiobacter).